The following is a 352-amino-acid chain: Ion-translocating oxidoreductase complex subunit D (352 aa).

Transmembrane regions (helical) follow at residues 20-40 (IMLLVLLAAVPGIAAQLCFFG), 42-62 (GTLVQILLASVSALLAEALVL), 89-109 (IPPLAPWWMVVLGTVFAVIIA), and 123-143 (PAMIGYVVLLISFPVQMTSWL). At T187 the chain carries FMN phosphoryl threonine. 5 helical membrane-spanning segments follow: residues 215-235 (LAGAGWQWVNLAWLAGGVWLL), 242-262 (WHIPLSFLVTLALCATLGWLF), 267-287 (LAAPQIHLLSGATMLGAFFIL), 301-321 (LIFGALAGLLVWLIRSFGGYP), and 322-342 (DGVAFAVLLANITVPLIDYYT).

This sequence belongs to the NqrB/RnfD family. In terms of assembly, the complex is composed of six subunits: RsxA, RsxB, RsxC, RsxD, RsxE and RsxG. FMN is required as a cofactor.

The protein localises to the cell inner membrane. Functionally, part of a membrane-bound complex that couples electron transfer with translocation of ions across the membrane. Required to maintain the reduced state of SoxR. The chain is Ion-translocating oxidoreductase complex subunit D from Escherichia coli O7:K1 (strain IAI39 / ExPEC).